We begin with the raw amino-acid sequence, 211 residues long: N-(5'-phosphoribosyl)anthranilate isomerase (211 aa).

Belongs to the TrpF family.

The enzyme catalyses N-(5-phospho-beta-D-ribosyl)anthranilate = 1-(2-carboxyphenylamino)-1-deoxy-D-ribulose 5-phosphate. The protein operates within amino-acid biosynthesis; L-tryptophan biosynthesis; L-tryptophan from chorismate: step 3/5. The sequence is that of N-(5'-phosphoribosyl)anthranilate isomerase from Nitrosomonas europaea (strain ATCC 19718 / CIP 103999 / KCTC 2705 / NBRC 14298).